The sequence spans 382 residues: Anhydro-N-acetylmuramic acid kinase (382 aa).

Glycine 22–aspartate 29 provides a ligand contact to ATP.

Belongs to the anhydro-N-acetylmuramic acid kinase family.

It carries out the reaction 1,6-anhydro-N-acetyl-beta-muramate + ATP + H2O = N-acetyl-D-muramate 6-phosphate + ADP + H(+). Its pathway is amino-sugar metabolism; 1,6-anhydro-N-acetylmuramate degradation. It functions in the pathway cell wall biogenesis; peptidoglycan recycling. In terms of biological role, catalyzes the specific phosphorylation of 1,6-anhydro-N-acetylmuramic acid (anhMurNAc) with the simultaneous cleavage of the 1,6-anhydro ring, generating MurNAc-6-P. Is required for the utilization of anhMurNAc either imported from the medium or derived from its own cell wall murein, and thus plays a role in cell wall recycling. This chain is Anhydro-N-acetylmuramic acid kinase, found in Burkholderia orbicola (strain AU 1054).